Here is a 122-residue protein sequence, read N- to C-terminus: UPF0382 membrane protein SERP0230 (122 aa).

The next 4 helical transmembrane spans lie at V3–A23, M46–V66, A69–L89, and I98–L118.

It belongs to the UPF0382 family.

It is found in the cell membrane. In Staphylococcus epidermidis (strain ATCC 35984 / DSM 28319 / BCRC 17069 / CCUG 31568 / BM 3577 / RP62A), this protein is UPF0382 membrane protein SERP0230.